The sequence spans 257 residues: uncharacterized protein (257 aa).

Disordered stretches follow at residues 1–178 (MAMF…SYDS) and 194–248 (AITK…LAGN). Basic residues predominate over residues 12–21 (SKLKKGRRKL). Positions 50–71 (NTNSGSSSDGEDGLLTSSGSDS) are enriched in low complexity. A compositionally biased stretch (polar residues) spans 72–94 (VFNSTDYFSTPEDSQNCTPSDVS). The segment covering 102–114 (LDFKPADVLHDSE) has biased composition (basic and acidic residues). The span at 115 to 126 (NSTSPKFITSLV) shows a compositional bias: polar residues. Positions 127 to 136 (SSDSENSGAD) are enriched in low complexity. The span at 163–178 (ITSEEDCCVQEDSYDS) shows a compositional bias: acidic residues.

It belongs to the herpesviridae BKRF4 family.

This is an uncharacterized protein from Saimiriine herpesvirus 2 (strain 11) (SaHV-2).